We begin with the raw amino-acid sequence, 172 residues long: Protein-export protein SecB (172 aa).

The tract at residues 153 to 172 (AQGQGGDSGIVMPDGSQARH) is disordered.

This sequence belongs to the SecB family. As to quaternary structure, homotetramer, a dimer of dimers. One homotetramer interacts with 1 SecA dimer.

The protein resides in the cytoplasm. In terms of biological role, one of the proteins required for the normal export of preproteins out of the cell cytoplasm. It is a molecular chaperone that binds to a subset of precursor proteins, maintaining them in a translocation-competent state. It also specifically binds to its receptor SecA. The protein is Protein-export protein SecB of Cupriavidus metallidurans (strain ATCC 43123 / DSM 2839 / NBRC 102507 / CH34) (Ralstonia metallidurans).